Here is a 307-residue protein sequence, read N- to C-terminus: 4-diphosphocytidyl-2-C-methyl-D-erythritol kinase (307 aa).

Lys9 is a catalytic residue. 94-104 provides a ligand contact to ATP; the sequence is PIGAGLAGGSS. Asp136 is a catalytic residue.

The protein belongs to the GHMP kinase family. IspE subfamily.

It carries out the reaction 4-CDP-2-C-methyl-D-erythritol + ATP = 4-CDP-2-C-methyl-D-erythritol 2-phosphate + ADP + H(+). The protein operates within isoprenoid biosynthesis; isopentenyl diphosphate biosynthesis via DXP pathway; isopentenyl diphosphate from 1-deoxy-D-xylulose 5-phosphate: step 3/6. Functionally, catalyzes the phosphorylation of the position 2 hydroxy group of 4-diphosphocytidyl-2C-methyl-D-erythritol. The sequence is that of 4-diphosphocytidyl-2-C-methyl-D-erythritol kinase from Synechococcus sp. (strain CC9605).